The primary structure comprises 66 residues: Large ribosomal subunit protein eL24 (66 aa).

Zn(2+) contacts are provided by C6, C9, C32, and C36. The segment at C6–C36 adopts a C4-type zinc-finger fold.

This sequence belongs to the eukaryotic ribosomal protein eL24 family. As to quaternary structure, part of the 50S ribosomal subunit. Forms a cluster with proteins L3 and L14. It depends on Zn(2+) as a cofactor.

Its function is as follows. Binds to the 23S rRNA. The protein is Large ribosomal subunit protein eL24 of Picrophilus torridus (strain ATCC 700027 / DSM 9790 / JCM 10055 / NBRC 100828 / KAW 2/3).